The chain runs to 222 residues: Protein GrpE (222 aa).

This sequence belongs to the GrpE family. As to quaternary structure, homodimer.

The protein localises to the cytoplasm. In terms of biological role, participates actively in the response to hyperosmotic and heat shock by preventing the aggregation of stress-denatured proteins, in association with DnaK and GrpE. It is the nucleotide exchange factor for DnaK and may function as a thermosensor. Unfolded proteins bind initially to DnaJ; upon interaction with the DnaJ-bound protein, DnaK hydrolyzes its bound ATP, resulting in the formation of a stable complex. GrpE releases ADP from DnaK; ATP binding to DnaK triggers the release of the substrate protein, thus completing the reaction cycle. Several rounds of ATP-dependent interactions between DnaJ, DnaK and GrpE are required for fully efficient folding. This Bartonella bacilliformis (strain ATCC 35685 / KC583 / Herrer 020/F12,63) protein is Protein GrpE.